The primary structure comprises 463 residues: L-seryl-tRNA(Sec) selenium transferase (463 aa).

An N6-(pyridoxal phosphate)lysine modification is found at Lys-295.

Belongs to the SelA family. Homodecamer; pentamer of dimers. Binds only one seryl-tRNA(Sec) per dimer. Pyridoxal 5'-phosphate serves as cofactor.

It localises to the cytoplasm. It catalyses the reaction L-seryl-tRNA(Sec) + selenophosphate + H(+) = L-selenocysteinyl-tRNA(Sec) + phosphate. It functions in the pathway aminoacyl-tRNA biosynthesis; selenocysteinyl-tRNA(Sec) biosynthesis; selenocysteinyl-tRNA(Sec) from L-seryl-tRNA(Sec) (bacterial route): step 1/1. Converts seryl-tRNA(Sec) to selenocysteinyl-tRNA(Sec) required for selenoprotein biosynthesis. The protein is L-seryl-tRNA(Sec) selenium transferase of Escherichia coli O17:K52:H18 (strain UMN026 / ExPEC).